Reading from the N-terminus, the 587-residue chain is Glutaconyl-CoA decarboxylase subunit alpha (587 aa).

Positions 31–298 (LKKIEEEIHQ…YDPEFFRVDD (268 aa)) constitute a CoA carboxyltransferase N-terminal domain. Residues 31-558 (LKKIEEEIHQ…RGYVEAFTEA (528 aa)) are carboxyltransferase. In terms of domain architecture, CoA carboxyltransferase C-terminal spans 295–558 (RVDDPKAPAF…RGYVEAFTEA (264 aa)).

Heterooctamer consisting of two alpha, two beta, two gamma and two delta subunits.

It catalyses the reaction (2E)-glutaconyl-CoA + Na(+)(in) + H(+) = (2E)-butenoyl-CoA + Na(+)(out) + CO2. It functions in the pathway amino-acid degradation; L-glutamate degradation via hydroxyglutarate pathway; crotonoyl-CoA from L-glutamate: step 5/5. In terms of biological role, decarboxylase subunit of the primary sodium pump glutaconyl-CoA decarboxylase (GCD). This is Glutaconyl-CoA decarboxylase subunit alpha (gcdA) from Acidaminococcus fermentans (strain ATCC 25085 / DSM 20731 / CCUG 9996 / CIP 106432 / VR4).